The primary structure comprises 93 residues: UPF0473 protein CHY_0543 (93 aa).

It belongs to the UPF0473 family.

This Carboxydothermus hydrogenoformans (strain ATCC BAA-161 / DSM 6008 / Z-2901) protein is UPF0473 protein CHY_0543.